The chain runs to 57 residues: Small ribosomal subunit protein bS21 (57 aa).

It belongs to the bacterial ribosomal protein bS21 family.

The polypeptide is Small ribosomal subunit protein bS21 (Lysinibacillus sphaericus (strain C3-41)).